Consider the following 1002-residue polypeptide: MPTPVTTARQCLTEETARALDDAVSVARRRSHAQTTSLHAVSGLLTMPSSILREVCISRAAHNTPYSSRLQFRALELCVGVSLDRLPSSKSTPTTTVEEDPPVSNSLMAAIKRSQATQRRHPETYHLHQIHGNNNTETTSVLKVELKYFILSILDDPIVSRVFGEAGFRSTDIKLDVLHPPVTSQFSSRFTSRSRIPPLFLCNLPESDSGRVRFGFPFGDLDENCRRIGEVLARKDKKNPLLVGVCGVEALKTFTDSINRGKFGFLPLEISGLSVVSIKISEVLVDGSRIDIKFDDLGRLKSGMVLNLGELKVLASDVFSVDVIEKFVLKLADLLKLHREKLWFIGSVSSNETYLKLIERFPTIDKDWNLHLLPITSSSQGLYPKSSLMGSFVPFGGFFSSTSDFRIPSSSSMNQTLPRCHLCNEKYEQEVTAFAKSGSMIDDQCSEKLPSWLRNVEHEHEKGNLGKVKDDPNVLASRIPALQKKWDDICQRIHQTPAFPKLSFQPVRPQFPLQLGSSSQTKMSLGSPTEKIVCTRTSESFQGMVALPQNPPHQPGLSVKISKPKHTEDLSSSTTNSPLSFVTTDLGLGTIYASKNQEPSTPVSVERRDFEVIKEKQLLSASRYCKDFKSLRELLSRKVGFQNEAVNAISEIVCGYRDESRRRNNHVATTSNVWLALLGPDKAGKKKVALALAEVFCGGQDNFICVDFKSQDSLDDRFRGKTVVDYIAGEVARRADSVVFIENVEKAEFPDQIRLSEAMRTGKLRDSHGREISMKNVIVVATISGSDKASDCHVLEEPVKYSEERVLNAKNWTLQIKLADTSNVNKNGPNKRRQEEAETEVTELRALKSQRSFLDLNLPVDEIEANEDEAYTMSENTEAWLEDFVEQVDGKVTFKLIDFDELAKNIKRNILSLFHLSFGPETHLEIENDVILKILAALRWSSDEEKTFDQWLQTVLAPSFAKARQKCVPAAPFSVKLVASRESPAEEETTGIQQFPARVEVI.

Residues 8–185 (ARQCLTEETA…DVLHPPVTSQ (178 aa)) form the Clp R domain. Repeat regions lie at residues 12-86 (LTEE…LDRL) and 103-185 (VSNS…VTSQ). The EAR signature appears at 854–858 (LDLNL).

It belongs to the ClpA/ClpB family. As to quaternary structure, interacts with TPL/TPR in an EAR-motif dependent manner. Interacts with TPL, TPR1, TPR2 and TPR4. Interacts with MAX2 and TPR2. Interacts with D14. The interaction with D14 occurs in the presence of (2'R) stereoisomers of strigolactones, but not (2'S) stereoisomers. In terms of processing, ubiquitinated upon strigolactone treatment. Strigolactone, but not karrikin, triggers rapid SCF(MAX2)-dependent degradation. As to expression, expressed in axillary branches and roots. Detected in seedlings and leaves. Expressed in the primary rosette buds and expanding leaves of adult rosettes, the vasculature of the hypocotyls, cotyledons, and mature roots, and in the midvein and petioles of young leaves.

It localises to the nucleus. Functionally, probable component of a transcriptional corepressor complex involved in branching control. Regulates cotyledon expansion and lateral root growth, but not germination or hypocotyl elongation. Promotes auxin transport and PIN1 accumulation in the stem and represses BRC1/TCP18 expression in axillary buds. The protein is Protein SMAX1-LIKE 7 of Arabidopsis thaliana (Mouse-ear cress).